The primary structure comprises 490 residues: Aspartyl/glutamyl-tRNA(Asn/Gln) amidotransferase subunit B (490 aa).

The protein belongs to the GatB/GatE family. GatB subfamily. In terms of assembly, heterotrimer of A, B and C subunits.

It catalyses the reaction L-glutamyl-tRNA(Gln) + L-glutamine + ATP + H2O = L-glutaminyl-tRNA(Gln) + L-glutamate + ADP + phosphate + H(+). It carries out the reaction L-aspartyl-tRNA(Asn) + L-glutamine + ATP + H2O = L-asparaginyl-tRNA(Asn) + L-glutamate + ADP + phosphate + 2 H(+). Its function is as follows. Allows the formation of correctly charged Asn-tRNA(Asn) or Gln-tRNA(Gln) through the transamidation of misacylated Asp-tRNA(Asn) or Glu-tRNA(Gln) in organisms which lack either or both of asparaginyl-tRNA or glutaminyl-tRNA synthetases. The reaction takes place in the presence of glutamine and ATP through an activated phospho-Asp-tRNA(Asn) or phospho-Glu-tRNA(Gln). The polypeptide is Aspartyl/glutamyl-tRNA(Asn/Gln) amidotransferase subunit B (Methylobacterium nodulans (strain LMG 21967 / CNCM I-2342 / ORS 2060)).